Here is a 156-residue protein sequence, read N- to C-terminus: Oxidized purine nucleoside triphosphate hydrolase (156 aa).

One can recognise a Nudix hydrolase domain in the interval 3–132; that stretch reads ASRLYTLVLV…WFPLLLQKKK (130 aa). Threonine 8 serves as a coordination point for 2-oxo-dATP. Residues threonine 8 and lysine 23 each contribute to the 8-oxo-dGMP site. The 8-oxo-dGTP site is built by threonine 8 and lysine 23. N(6)-methyl-AMP contacts are provided by threonine 8 and lysine 23. The O(6)-methyl-dGMP site is built by threonine 8 and lysine 23. Phenylalanine 27 lines the 8-oxo-ATP pocket. Residues asparagine 33 and 35 to 38 each bind 2-oxo-dATP; that span reads FGGK. Asparagine 33 serves as a coordination point for 8-oxo-dGMP. 8-oxo-dGTP is bound by residues asparagine 33 and 35-38; that span reads FGGK. Asparagine 33 is an O(6)-methyl-dGMP binding site. 8-oxo-ATP contacts are provided by residues 35 to 38 and glutamate 52; that span reads FGGK. 5 residues coordinate Mg(2+): glycine 36, glutamate 52, glutamate 55, glutamate 56, and glutamate 100. Residues 37–58 carry the Nudix box motif; the sequence is GKVQEGETIEDGARRELQEESG. Glutamate 56 serves as a coordination point for 8-oxo-ATP. 2-oxo-dATP is bound at residue 117 to 120; it reads WPDD. 117–120 contacts 8-oxo-dGMP; it reads WPDD. 117 to 120 contributes to the 8-oxo-dGTP binding site; sequence WPDD. 117–120 is a binding site for N(6)-methyl-AMP; it reads WPDD. 117-120 contacts O(6)-methyl-dGMP; the sequence is WPDD. Residue 117–120 coordinates 8-oxo-ATP; it reads WPDD.

Belongs to the Nudix hydrolase family. As to quaternary structure, monomer. Mg(2+) is required as a cofactor. Post-translationally, the N-terminus is blocked. Widely expressed with highest expression in thymus, testis, embryo and proliferating blood lymphocytes.

Its subcellular location is the cytoplasm. It localises to the cytosol. The protein localises to the mitochondrion matrix. It is found in the nucleus. It catalyses the reaction 2-oxo-dATP + H2O = 2-oxo-dAMP + diphosphate + H(+). The catalysed reaction is 2-oxo-ATP + H2O = 2-oxo-AMP + diphosphate + H(+). It carries out the reaction 8-oxo-dGTP + H2O = 8-oxo-dGMP + diphosphate + H(+). The enzyme catalyses 8-oxo-dATP + H2O = 8-oxo-dAMP + diphosphate + H(+). It catalyses the reaction O(6)-methyl-dGTP + H2O = O(6)-methyl-dGMP + diphosphate + H(+). The catalysed reaction is N(6)-methyl-dATP + H2O = N(6)-methyl-dAMP + diphosphate + H(+). It carries out the reaction N(6)-methyl-ATP + H2O = N(6)-methyl-AMP + diphosphate + H(+). Inhibited by 2-oxo-dADP and 8-oxo-dGDP. Its function is as follows. Oxidized purine nucleoside triphosphate hydrolase which is a prominent sanitizer of the oxidized nucleotide pool. Catalyzes the hydrolysis of 2-oxo-dATP (2-hydroxy-dATP) into 2-oxo-dAMP. Also has a significant hydrolase activity toward 2-oxo-ATP, 8-oxo-dGTP and 8-oxo-dATP. Through the hydrolysis of oxidized purine nucleoside triphosphates, prevents their incorporation into DNA and the subsequent transversions A:T to C:G and G:C to T:A. Also catalyzes the hydrolysis of methylated purine nucleoside triphosphate preventing their integration into DNA. Through this antimutagenic activity protects cells from oxidative stress. This is Oxidized purine nucleoside triphosphate hydrolase (NUDT1) from Homo sapiens (Human).